A 147-amino-acid chain; its full sequence is Hemoglobin subunit beta (147 aa).

Valine 2 is modified (N-acetylvaline). Residues 3–147 (HLTGEEKAAV…VANALAHKYH (145 aa)) form the Globin domain. Threonine 13 bears the Phosphothreonine mark. Residue serine 45 is modified to Phosphoserine. Lysine 60 bears the N6-acetyllysine mark. Residue histidine 64 coordinates heme b. Lysine 83 carries the post-translational modification N6-acetyllysine. A heme b-binding site is contributed by histidine 93. Residue cysteine 94 is modified to S-nitrosocysteine. An N6-acetyllysine modification is found at lysine 145.

The protein belongs to the globin family. In terms of assembly, heterotetramer of two alpha chains and two beta chains. Red blood cells.

Functionally, involved in oxygen transport from the lung to the various peripheral tissues. This chain is Hemoglobin subunit beta (HBB), found in Ailuropoda melanoleuca (Giant panda).